Reading from the N-terminus, the 444-residue chain is Trigger factor (444 aa).

One can recognise a PPIase FKBP-type domain in the interval 165–250 (GDFAKFDFEG…LHEIQELKIP (86 aa)).

Belongs to the FKBP-type PPIase family. Tig subfamily.

The protein localises to the cytoplasm. It carries out the reaction [protein]-peptidylproline (omega=180) = [protein]-peptidylproline (omega=0). Its function is as follows. Involved in protein export. Acts as a chaperone by maintaining the newly synthesized protein in an open conformation. Functions as a peptidyl-prolyl cis-trans isomerase. This is Trigger factor from Campylobacter jejuni subsp. jejuni serotype O:6 (strain 81116 / NCTC 11828).